A 331-amino-acid polypeptide reads, in one-letter code: N-arachidonyl glycine receptor (331 aa).

Over 1 to 26 (MITLNNQDQPVPFNNSYPDEYEIAAL) the chain is Extracellular. An N-linked (GlcNAc...) asparagine glycan is attached at Asn14. A helical transmembrane segment spans residues 27-47 (VFYSCIFIIGLFVNITALWVF). Over 48–56 (SCTTKKRTT) the chain is Cytoplasmic. Residues 57–77 (VTIYMMNVALVDLIFIMTLPF) form a helical membrane-spanning segment. The Extracellular portion of the chain corresponds to 78-95 (RMFYYAKDEWPFGEYFCQ). Cys94 and Cys172 are oxidised to a cystine. Residues 96–116 (ILGALTVFYPSIALWLLAFIS) form a helical membrane-spanning segment. The Cytoplasmic segment spans residues 117-138 (ADRYMAIVQPKYAKELKNTCKA). The chain crosses the membrane as a helical span at residues 139–159 (VLACVGVWIMTLTTTIPLLLL). The Extracellular portion of the chain corresponds to 160–191 (HKDPDKDSTPATCLKISDIVYLKAVNVLNFTR). Asn188 carries N-linked (GlcNAc...) asparagine glycosylation. The chain crosses the membrane as a helical span at residues 192 to 212 (LTFFFLIPLFIMIGCYLVIIH). Residues 213–232 (NLLHGRTSKLKPKVKEKSIR) are Cytoplasmic-facing. Residues 233–253 (IIITLLVQVLVCFMPFHICFA) traverse the membrane as a helical segment. The Extracellular portion of the chain corresponds to 254–268 (FLMLGTGENSYSPWG). Residues 269–289 (AFTTFLMNLSTCLDVILYYIV) traverse the membrane as a helical segment. Residues 290-331 (SKQFQARVISVMLYRNYLRGMRRKSFRSGSLRSLSNINSEML) lie on the Cytoplasmic side of the membrane. Ser322 carries the phosphoserine modification.

It belongs to the G-protein coupled receptor 1 family.

It localises to the cell membrane. It is found in the cytoplasmic vesicle membrane. Its function is as follows. G protein-coupled receptor (GPCR) that plays a role in diverse physiological processes particularly within the immune and nervous systems. Becomes active when triggered by various endogenous ligands including endocannabinoid N-arachidonyl glycine (NAGly), delta-9-tetrahydrocannabinol or resolvin D2/RvD2 derived from the omega-3 fatty acid docosahexaenoic acid (DHA). Upon RvD2 binding, facilitates the resolution of inflammation, aiding in tissue repair and homeostasis. Mechanistically, RvD2 ligation initiates Galphas protein coupling, activation of cAMP-PKA signaling pathway and phosphorylation of STAT3, leading to RvD2-stimulated macrophage phagocytosis. Mediates NAGly-induced process of reorganization of actin filaments and induction of acrosomal exocytosis. Activation by N-arachidonoyl glycine (NAGly) can also induce apoptosis in macrophages. Plays a role in homeostasis of CD8+ subsets of intraepithelial lymphocytes (IELs) (CD8alphaalpha and CD8alphabeta IELs) in small intestine by supporting preferential migration of CD8alphaalpha T-cells to intraepithelial compartment over lamina propria compartment, and by mediating their reconstitution into small intestine after bone marrow transplant. Participates also in hypotensive responses, mediating reduction in intraocular and blood pressure. The polypeptide is N-arachidonyl glycine receptor (Macaca fascicularis (Crab-eating macaque)).